A 95-amino-acid chain; its full sequence is Integration host factor subunit beta (95 aa).

The protein belongs to the bacterial histone-like protein family. Heterodimer of an alpha and a beta chain.

Its function is as follows. This protein is one of the two subunits of integration host factor, a specific DNA-binding protein that functions in genetic recombination as well as in transcriptional and translational control. The sequence is that of Integration host factor subunit beta from Psychromonas ingrahamii (strain DSM 17664 / CCUG 51855 / 37).